The primary structure comprises 280 residues: Thiamine-phosphate synthase (280 aa).

A disordered region spans residues 1–64 (MGWSGSPLTL…ATGRGGLRMT (64 aa)). A compositionally biased stretch (basic and acidic residues) spans 42–55 (GRGELRSRERRGEA). 4-amino-2-methyl-5-(diphosphooxymethyl)pyrimidine-binding positions include 104 to 108 (QLRCK) and Asn-141. Mg(2+) is bound by residues Asp-142 and Asp-161. Ser-179 contacts 4-amino-2-methyl-5-(diphosphooxymethyl)pyrimidine. 205–207 (TPT) lines the 2-[(2R,5Z)-2-carboxy-4-methylthiazol-5(2H)-ylidene]ethyl phosphate pocket. Residue Lys-208 coordinates 4-amino-2-methyl-5-(diphosphooxymethyl)pyrimidine. Gly-236 lines the 2-[(2R,5Z)-2-carboxy-4-methylthiazol-5(2H)-ylidene]ethyl phosphate pocket.

This sequence belongs to the thiamine-phosphate synthase family. Mg(2+) is required as a cofactor.

The enzyme catalyses 2-[(2R,5Z)-2-carboxy-4-methylthiazol-5(2H)-ylidene]ethyl phosphate + 4-amino-2-methyl-5-(diphosphooxymethyl)pyrimidine + 2 H(+) = thiamine phosphate + CO2 + diphosphate. The catalysed reaction is 2-(2-carboxy-4-methylthiazol-5-yl)ethyl phosphate + 4-amino-2-methyl-5-(diphosphooxymethyl)pyrimidine + 2 H(+) = thiamine phosphate + CO2 + diphosphate. It carries out the reaction 4-methyl-5-(2-phosphooxyethyl)-thiazole + 4-amino-2-methyl-5-(diphosphooxymethyl)pyrimidine + H(+) = thiamine phosphate + diphosphate. It functions in the pathway cofactor biosynthesis; thiamine diphosphate biosynthesis; thiamine phosphate from 4-amino-2-methyl-5-diphosphomethylpyrimidine and 4-methyl-5-(2-phosphoethyl)-thiazole: step 1/1. Functionally, condenses 4-methyl-5-(beta-hydroxyethyl)thiazole monophosphate (THZ-P) and 2-methyl-4-amino-5-hydroxymethyl pyrimidine pyrophosphate (HMP-PP) to form thiamine monophosphate (TMP). The chain is Thiamine-phosphate synthase from Deinococcus radiodurans (strain ATCC 13939 / DSM 20539 / JCM 16871 / CCUG 27074 / LMG 4051 / NBRC 15346 / NCIMB 9279 / VKM B-1422 / R1).